We begin with the raw amino-acid sequence, 25 residues long: Bioremediase (25 aa).

The Alpha-carbonic anhydrase domain maps to 1-25; sequence DFPIANGERQSPVDIDTKAVVQDPA. A disordered region spans residues 1–25; sequence DFPIANGERQSPVDIDTKAVVQDPA.

It belongs to the alpha-carbonic anhydrase family. Requires Zn(2+) as cofactor.

Its function is as follows. Releases silica from silica-rich substances. This Thermoanaerobacter sp protein is Bioremediase.